Here is a 192-residue protein sequence, read N- to C-terminus: Ribosomal RNA small subunit methyltransferase G (192 aa).

S-adenosyl-L-methionine is bound by residues Gly59, 111-112 (IE), and Arg124.

It belongs to the methyltransferase superfamily. RNA methyltransferase RsmG family.

The protein resides in the cytoplasm. Specifically methylates the N7 position of a guanine in 16S rRNA. This chain is Ribosomal RNA small subunit methyltransferase G, found in Mycoplasma genitalium (strain ATCC 33530 / DSM 19775 / NCTC 10195 / G37) (Mycoplasmoides genitalium).